Reading from the N-terminus, the 178-residue chain is Cell division protein ZapC (178 aa).

It belongs to the ZapC family. Interacts directly with FtsZ.

The protein resides in the cytoplasm. Functionally, contributes to the efficiency of the cell division process by stabilizing the polymeric form of the cell division protein FtsZ. Acts by promoting interactions between FtsZ protofilaments and suppressing the GTPase activity of FtsZ. The sequence is that of Cell division protein ZapC from Aeromonas hydrophila subsp. hydrophila (strain ATCC 7966 / DSM 30187 / BCRC 13018 / CCUG 14551 / JCM 1027 / KCTC 2358 / NCIMB 9240 / NCTC 8049).